We begin with the raw amino-acid sequence, 118 residues long: Immunoglobulin heavy variable 3-9 (118 aa).

A signal peptide spans 1-19 (MELGLSWIFLLAILKGVQC). The tract at residues 20-44 (EVQLVESGGGLVQPGRSLRLSCAAS) is framework-1. An Ig-like domain is found at 20 to 118 (EVQLVESGGG…DTALYYCAKD (99 aa)). Cysteine 41 and cysteine 115 are joined by a disulfide. Residues 45-52 (GFTFDDYA) form a complementarity-determining-1 region. Residues 53 to 69 (MHWVRQAPGKGLEWVSG) are framework-2. The interval 70–77 (ISWNSGSI) is complementarity-determining-2. The framework-3 stretch occupies residues 78–115 (GYADSVKGRFTISRDNAKNSLYLQMNSLRAEDTALYYC). The segment at 116-118 (AKD) is complementarity-determining-3.

Immunoglobulins are composed of two identical heavy chains and two identical light chains; disulfide-linked.

The protein localises to the secreted. Its subcellular location is the cell membrane. V region of the variable domain of immunoglobulin heavy chains that participates in the antigen recognition. Immunoglobulins, also known as antibodies, are membrane-bound or secreted glycoproteins produced by B lymphocytes. In the recognition phase of humoral immunity, the membrane-bound immunoglobulins serve as receptors which, upon binding of a specific antigen, trigger the clonal expansion and differentiation of B lymphocytes into immunoglobulins-secreting plasma cells. Secreted immunoglobulins mediate the effector phase of humoral immunity, which results in the elimination of bound antigens. The antigen binding site is formed by the variable domain of one heavy chain, together with that of its associated light chain. Thus, each immunoglobulin has two antigen binding sites with remarkable affinity for a particular antigen. The variable domains are assembled by a process called V-(D)-J rearrangement and can then be subjected to somatic hypermutations which, after exposure to antigen and selection, allow affinity maturation for a particular antigen. This chain is Immunoglobulin heavy variable 3-9, found in Homo sapiens (Human).